Here is a 180-residue protein sequence, read N- to C-terminus: Isopentenyl-diphosphate Delta-isomerase (180 aa).

Residues His26 and His32 each coordinate Mn(2+). A Nudix hydrolase domain is found at 30-168 (ALHLAFSVLL…PELFTAWFPQ (139 aa)). The active site involves Cys70. Position 70 (Cys70) interacts with Mg(2+). Mn(2+) is bound at residue His72. A Mg(2+)-binding site is contributed by Glu90. The Mn(2+) site is built by Glu117 and Glu119. Glu119 is a catalytic residue.

Belongs to the IPP isomerase type 1 family. Mg(2+) serves as cofactor. The cofactor is Mn(2+).

Its subcellular location is the cytoplasm. The catalysed reaction is isopentenyl diphosphate = dimethylallyl diphosphate. The protein operates within isoprenoid biosynthesis; dimethylallyl diphosphate biosynthesis; dimethylallyl diphosphate from isopentenyl diphosphate: step 1/1. In terms of biological role, catalyzes the 1,3-allylic rearrangement of the homoallylic substrate isopentenyl (IPP) to its highly electrophilic allylic isomer, dimethylallyl diphosphate (DMAPP). The chain is Isopentenyl-diphosphate Delta-isomerase from Photobacterium profundum (strain SS9).